The sequence spans 444 residues: Adenylosuccinate synthetase (444 aa).

GTP-binding positions include 12 to 18 and 40 to 42; these read GDEGKGK and GHT. Catalysis depends on aspartate 13, which acts as the Proton acceptor. 2 residues coordinate Mg(2+): aspartate 13 and glycine 40. IMP is bound by residues 13 to 16, 38 to 41, threonine 128, arginine 142, glutamine 223, threonine 238, and arginine 302; these read DEGK and NAGH. Residue histidine 41 is the Proton donor of the active site. 298–304 contributes to the substrate binding site; sequence TTTGRRR. GTP contacts are provided by residues arginine 304, 330–332, and 412–414; these read KLD and SLG.

Belongs to the adenylosuccinate synthetase family. As to quaternary structure, homodimer. The cofactor is Mg(2+).

It localises to the cytoplasm. It carries out the reaction IMP + L-aspartate + GTP = N(6)-(1,2-dicarboxyethyl)-AMP + GDP + phosphate + 2 H(+). It participates in purine metabolism; AMP biosynthesis via de novo pathway; AMP from IMP: step 1/2. Its function is as follows. Plays an important role in the de novo pathway of purine nucleotide biosynthesis. Catalyzes the first committed step in the biosynthesis of AMP from IMP. The protein is Adenylosuccinate synthetase of Synechococcus elongatus (strain ATCC 33912 / PCC 7942 / FACHB-805) (Anacystis nidulans R2).